Here is a 360-residue protein sequence, read N- to C-terminus: Endolytic peptidoglycan transglycosylase RlpA (360 aa).

Positions 1–17 (MRKEWLWVGIASVLLSA) are cleaved as a signal peptide. Cys-18 carries N-palmitoyl cysteine lipidation. A lipid anchor (S-diacylglycerol cysteine) is attached at Cys-18. An SPOR domain is found at 283-359 (SAISGGYVVQ…AQQQSFIVAA (77 aa)).

This sequence belongs to the RlpA family.

It is found in the cell membrane. Lytic transglycosylase with a strong preference for naked glycan strands that lack stem peptides. This chain is Endolytic peptidoglycan transglycosylase RlpA, found in Yersinia pestis.